The chain runs to 298 residues: Lipoyl synthase (298 aa).

Cys-40, Cys-45, Cys-51, Cys-67, Cys-71, Cys-74, and Ser-280 together coordinate [4Fe-4S] cluster. The Radical SAM core domain occupies 53–269 (AVRKTATFMI…KEIALSKGFS (217 aa)).

It belongs to the radical SAM superfamily. Lipoyl synthase family. [4Fe-4S] cluster serves as cofactor.

The protein resides in the cytoplasm. The enzyme catalyses [[Fe-S] cluster scaffold protein carrying a second [4Fe-4S](2+) cluster] + N(6)-octanoyl-L-lysyl-[protein] + 2 oxidized [2Fe-2S]-[ferredoxin] + 2 S-adenosyl-L-methionine + 4 H(+) = [[Fe-S] cluster scaffold protein] + N(6)-[(R)-dihydrolipoyl]-L-lysyl-[protein] + 4 Fe(3+) + 2 hydrogen sulfide + 2 5'-deoxyadenosine + 2 L-methionine + 2 reduced [2Fe-2S]-[ferredoxin]. It participates in protein modification; protein lipoylation via endogenous pathway; protein N(6)-(lipoyl)lysine from octanoyl-[acyl-carrier-protein]. Its function is as follows. Catalyzes the radical-mediated insertion of two sulfur atoms into the C-6 and C-8 positions of the octanoyl moiety bound to the lipoyl domains of lipoate-dependent enzymes, thereby converting the octanoylated domains into lipoylated derivatives. The sequence is that of Lipoyl synthase from Bacillus anthracis (strain A0248).